Consider the following 311-residue polypeptide: Aspartate carbamoyltransferase catalytic subunit (311 aa).

Positions 58 and 59 each coordinate carbamoyl phosphate. An L-aspartate-binding site is contributed by K86. Positions 108, 136, and 139 each coordinate carbamoyl phosphate. Residues R169 and R224 each contribute to the L-aspartate site. Residues G265 and P266 each coordinate carbamoyl phosphate.

This sequence belongs to the aspartate/ornithine carbamoyltransferase superfamily. ATCase family. In terms of assembly, heterododecamer (2C3:3R2) of six catalytic PyrB chains organized as two trimers (C3), and six regulatory PyrI chains organized as three dimers (R2).

It catalyses the reaction carbamoyl phosphate + L-aspartate = N-carbamoyl-L-aspartate + phosphate + H(+). It participates in pyrimidine metabolism; UMP biosynthesis via de novo pathway; (S)-dihydroorotate from bicarbonate: step 2/3. Catalyzes the condensation of carbamoyl phosphate and aspartate to form carbamoyl aspartate and inorganic phosphate, the committed step in the de novo pyrimidine nucleotide biosynthesis pathway. The sequence is that of Aspartate carbamoyltransferase catalytic subunit from Geotalea daltonii (strain DSM 22248 / JCM 15807 / FRC-32) (Geobacter daltonii).